A 255-amino-acid polypeptide reads, in one-letter code: Uridylate kinase (255 aa).

22 to 25 contributes to the ATP binding site; the sequence is KLSG. The tract at residues 30-35 is involved in allosteric activation by GTP; that stretch reads GNGGYG. Gly64 is a binding site for UMP. 2 residues coordinate ATP: Gly65 and Arg69. UMP is bound by residues Asp85 and 146–153; that span reads TGNPFFTT. Asn174, Tyr180, and Asp183 together coordinate ATP.

Belongs to the UMP kinase family. In terms of assembly, homohexamer.

It is found in the cytoplasm. The catalysed reaction is UMP + ATP = UDP + ADP. It participates in pyrimidine metabolism; CTP biosynthesis via de novo pathway; UDP from UMP (UMPK route): step 1/1. Its activity is regulated as follows. Allosterically activated by GTP. Inhibited by UTP. Functionally, catalyzes the reversible phosphorylation of UMP to UDP. The protein is Uridylate kinase of Rubrobacter xylanophilus (strain DSM 9941 / JCM 11954 / NBRC 16129 / PRD-1).